The primary structure comprises 217 residues: Uracil-DNA glycosylase (217 aa).

Residue Asp62 is the Proton acceptor of the active site.

It belongs to the uracil-DNA glycosylase (UDG) superfamily. UNG family.

Its subcellular location is the cytoplasm. The enzyme catalyses Hydrolyzes single-stranded DNA or mismatched double-stranded DNA and polynucleotides, releasing free uracil.. In terms of biological role, excises uracil residues from the DNA which can arise as a result of misincorporation of dUMP residues by DNA polymerase or due to deamination of cytosine. The polypeptide is Uracil-DNA glycosylase (Streptococcus pyogenes serotype M49 (strain NZ131)).